Reading from the N-terminus, the 640-residue chain is 1-deoxy-D-xylulose-5-phosphate synthase (640 aa).

Thiamine diphosphate-binding positions include His79 and 120-122; that span reads GHS. Asp151 contributes to the Mg(2+) binding site. Thiamine diphosphate-binding positions include 152–153, Asn180, Tyr290, and Glu372; that span reads GS. Mg(2+) is bound at residue Asn180.

Belongs to the transketolase family. DXPS subfamily. As to quaternary structure, homodimer. The cofactor is Mg(2+). Requires thiamine diphosphate as cofactor.

The enzyme catalyses D-glyceraldehyde 3-phosphate + pyruvate + H(+) = 1-deoxy-D-xylulose 5-phosphate + CO2. It functions in the pathway metabolic intermediate biosynthesis; 1-deoxy-D-xylulose 5-phosphate biosynthesis; 1-deoxy-D-xylulose 5-phosphate from D-glyceraldehyde 3-phosphate and pyruvate: step 1/1. Its function is as follows. Catalyzes the acyloin condensation reaction between C atoms 2 and 3 of pyruvate and glyceraldehyde 3-phosphate to yield 1-deoxy-D-xylulose-5-phosphate (DXP). This chain is 1-deoxy-D-xylulose-5-phosphate synthase, found in Rhodopseudomonas palustris (strain BisA53).